Here is a 3084-residue protein sequence, read N- to C-terminus: Protein prune homolog 2 (3084 aa).

An N-acetylmethionine modification is found at Met-1. Residues 109-111 carry the DHH motif motif; it reads GSH. Disordered stretches follow at residues 394–417, 430–465, 500–536, 672–733, 811–837, 861–907, 947–1080, 1224–1316, 1338–1395, 1502–1543, 1600–1652, 1776–1799, 1836–1886, 1961–1980, 2071–2196, 2410–2782, 2797–2816, and 2825–2859; these read QPSS…QADG, TIRS…PGFD, ASEQ…PKGL, EQES…QKEE, KNTW…MGQS, EIWG…KATG, SASN…DDPS, NMPS…GQSE, SGVN…LEVE, MNST…DLHD, GFGK…TTKR, ETGT…DPDK, GELE…GDKS, DENG…QENQ, ILTH…NPEV, MLLS…SHPR, QSEG…EIDI, and DEAD…AEEE. The segment covering 501–511 has biased composition (polar residues); it reads SEQSQPSSHSA. Composition is skewed to basic and acidic residues over residues 682–696 and 723–733; these read PWKD…RRTS and GNKEAQDQKEE. Composition is skewed to polar residues over residues 811-828 and 865-891; these read KNTW…SGQE and KNNS…NNSK. Residues 962–975 are compositionally biased toward low complexity; sequence TNYSTSDSYTSPTY. Residues 977–999 are compositionally biased toward basic and acidic residues; that stretch reads GDEKEIANKPVDKDNGFEAKDAE. The span at 1009 to 1019 shows a compositional bias: polar residues; the sequence is ATSSQQSQRNR. The span at 1034 to 1063 shows a compositional bias: basic and acidic residues; it reads HTEDKPEGNDAHHPDSDALKTEHAEDKNAS. Residues 1071-1080 show a composition bias toward low complexity; sequence SSPSSYDDPS. Residues 1248 to 1261 are compositionally biased toward basic and acidic residues; the sequence is SPRHSNGKDSHMLE. The segment covering 1265–1294 has biased composition (polar residues); it reads LSESGGLTSQPVNQDTWGDSQGDTASSVTG. Basic and acidic residues predominate over residues 1350-1366; the sequence is KPRDQEFSSSDAFEHQD. Positions 1368-1378 are enriched in low complexity; sequence SSASGKISSLS. Polar residues-rich tracts occupy residues 1779-1792, 1854-1869, and 1965-1980; these read TMDT…STEA, PIQN…STNP, and CVST…QENQ. Basic and acidic residues predominate over residues 2089–2103; the sequence is VCHDSEGEQKMEKHT. Residues 2162 to 2174 show a composition bias toward low complexity; that stretch reads SSKPASSRSSPEP. Composition is skewed to basic and acidic residues over residues 2416–2428, 2506–2525, and 2535–2553; these read PDHR…ETNI, KQTE…EDHQ, and SHEK…RENI. A compositionally biased stretch (polar residues) spans 2569–2584; that stretch reads PETQLSGTPDTCQSEF. Over residues 2595 to 2606 the composition is skewed to low complexity; the sequence is RMSSSSNHESAS. Positions 2607–2617 are enriched in polar residues; the sequence is LENPAQDQSWM. Residues 2653-2664 are compositionally biased toward basic and acidic residues; that stretch reads KGPKSQVLERNK. A compositionally biased stretch (acidic residues) spans 2806–2816; the sequence is DNLDSPDEIDI. A compositionally biased stretch (polar residues) spans 2840–2849; it reads ANKSSGQESE. Residues 2879-3040 enclose the CRAL-TRIO domain; the sequence is DMKVIEPYRR…SIIKYDEEKS (162 aa).

The protein belongs to the PPase class C family. Prune subfamily.

It localises to the cytoplasm. Functionally, may play an important role in regulating differentiation, survival and aggressiveness of the tumor cells. The polypeptide is Protein prune homolog 2 (Prune2) (Mus musculus (Mouse)).